A 381-amino-acid polypeptide reads, in one-letter code: MSRHEGVSCDACLKGNFRGRRYKCLICYDYDLCASCYESGATTTRHTTDHPMQCILTRVDFDLYYGGEAFSVEQPQSFTCPYCGKMGYTETSLQEHVTSEHAETSTEVICPICAALPGGDPNHVTDDFAAHLTLEHRAPRDLDESSGVRHVRRMFHPGRGLGGPRARRTNMHFTSSSTGGLSSSQSSYSPSNREAMDPIAELLSQLSGVRRSTGGQLNSSGPSASQLQQLQMQLQLERQQAQAARQQLETARNATRRNNASNVTTTITQSTAATNTSSTENNQQSIQNSQFLLTRLNDPKMTEAERQSIESERADRSLFVQELLLSTLMQEESSSSDEDERGEIADFGAMGCVDIMPLDVALENLNLKESNKGNEPPPPPL.

Residues 4–60 form a ZZ-type zinc finger; that stretch reads HEGVSCDACLKGNFRGRRYKCLICYDYDLCASCYESGATTTRHTTDHPMQCILTRVD. Zn(2+) is bound by residues cysteine 9, cysteine 12, cysteine 24, cysteine 27, cysteine 33, cysteine 36, histidine 46, and histidine 50. The C2H2-type zinc-finger motif lies at 78 to 101; the sequence is FTCPYCGKMGYTETSLQEHVTSEH. 2 disordered regions span residues 154–193 and 241–286; these read MFHPGRGLGGPRARRTNMHFTSSSTGGLSSSQSSYSPSNR and AQAA…QQSI. Positions 175 to 191 are enriched in low complexity; the sequence is SSSTGGLSSSQSSYSPS. Positions 223–261 form a coiled coil; the sequence is SASQLQQLQMQLQLERQQAQAARQQLETARNATRRNNAS.

Belongs to the KCMF1 family. In terms of assembly, component of the SIFI complex, composed of kcmf1, ubr4 and calmodulin.

It is found in the cytoplasm. It localises to the late endosome. Its subcellular location is the lysosome. It catalyses the reaction S-ubiquitinyl-[E2 ubiquitin-conjugating enzyme]-L-cysteine + [acceptor protein]-L-lysine = [E2 ubiquitin-conjugating enzyme]-L-cysteine + N(6)-ubiquitinyl-[acceptor protein]-L-lysine.. It participates in protein modification; protein ubiquitination. E3 ubiquitin-protein ligase which accepts ubiquitin from an E2 ubiquitin-conjugating enzyme and then transfers it to targeted substrates, promoting their degradation by the proteasome. Together with UBR4, component of the N-end rule pathway: ubiquitinates proteins bearing specific N-terminal residues that are destabilizing according to the N-end rule, leading to their degradation. Does not ubiquitinate proteins that are acetylated at the N-terminus. Together with ubr4, part of a protein quality control pathway that catalyzes ubiquitination and degradation of proteins that have been oxidized in response to reactive oxygen species (ROS): recognizes proteins with an Arg-CysO3(H) degron at the N-terminus, and mediates assembly of heterotypic 'Lys-63'-/'Lys-27'-linked branched ubiquitin chains on oxidized proteins, leading to their degradation by autophagy. Catalytic component of the SIFI complex, a multiprotein complex required to inhibit the mitochondrial stress response after a specific stress event has been resolved: ubiquitinates and degrades (1) components of the HRI-mediated signaling of the integrated stress response, such as dele1 and eif2ak1/hri, as well as (2) unimported mitochondrial precursors. Within the SIFI complex, ubr4 initiates ubiquitin chain that are further elongated or branched by kcmf1. This chain is E3 ubiquitin-protein ligase KCMF1 (kcmf1), found in Xenopus laevis (African clawed frog).